Reading from the N-terminus, the 408-residue chain is S-adenosylmethionine synthase (408 aa).

An ATP-binding site is contributed by H15. Residue D17 coordinates Mg(2+). E43 provides a ligand contact to K(+). E56 and Q100 together coordinate L-methionine. Residues 100–110 are flexible loop; that stretch reads QSPDIAQGVNE. Residues 171–173, 248–249, D257, 263–264, A280, and K284 contribute to the ATP site; these read DGK, KF, and RK. Residue D257 coordinates L-methionine. K288 is an L-methionine binding site.

It belongs to the AdoMet synthase family. In terms of assembly, homotetramer; dimer of dimers. It depends on Mg(2+) as a cofactor. Requires K(+) as cofactor.

It is found in the cytoplasm. It carries out the reaction L-methionine + ATP + H2O = S-adenosyl-L-methionine + phosphate + diphosphate. It functions in the pathway amino-acid biosynthesis; S-adenosyl-L-methionine biosynthesis; S-adenosyl-L-methionine from L-methionine: step 1/1. Functionally, catalyzes the formation of S-adenosylmethionine (AdoMet) from methionine and ATP. The overall synthetic reaction is composed of two sequential steps, AdoMet formation and the subsequent tripolyphosphate hydrolysis which occurs prior to release of AdoMet from the enzyme. In Synechococcus sp. (strain CC9902), this protein is S-adenosylmethionine synthase.